Consider the following 1277-residue polypeptide: Membrane-associated guanylate kinase, WW and PDZ domain-containing protein 2 (1277 aa).

The region spanning 17–101 (ESVIGRNPEG…PLRLKCVKQG (85 aa)) is the PDZ domain. The Guanylate kinase-like domain maps to 109 to 283 (RHYLNLRFQK…APVYSQPEEL (175 aa)). A disordered region spans residues 205–308 (PGATPSAEGK…EDSDPLPDNW (104 aa)). The segment covering 281–296 (EELKDQMDDTKSTKPE) has biased composition (basic and acidic residues). 2 consecutive WW domains span residues 302-335 (DPLPDNWEMAYTEKGEVYFIDHNTKTTSWLDPRL) and 348-381 (NELPYGWEKIDDPIYGTYYVDHINRRTQFENPVL). The tract at residues 302–381 (DPLPDNWEMA…RRTQFENPVL (80 aa)) is interaction with DDN. Tyr362 carries the post-translational modification Phosphotyrosine. Residues 426–510 (STTLKKSNMG…SVNLVLCRGY (85 aa)) enclose the PDZ 1 domain. The interval 556–575 (QSVPDITDRPPHSLHSMPAD) is disordered. The 79-residue stretch at 605–683 (TLTIVKGAKG…ETSLIIHRGG (79 aa)) folds into the PDZ 2 domain. Position 686 is a phosphoserine (Ser686). The PDZ 3 domain occupies 778–860 (DVHLRRMESG…NGQVNLTVRR (83 aa)). The residue at position 827 (Tyr827) is a Phosphotyrosine. The segment at 869-913 (CPENGRSPGSVSTHHSSPRSDYATYANSNHAAPSNNASPPEGFAS) is disordered. Residues Ser884 and Ser885 each carry the phosphoserine modification. The span at 894–908 (ANSNHAAPSNNASPP) shows a compositional bias: low complexity. Positions 920-1010 (DVIIHRKENE…SVTLRIIPQE (91 aa)) constitute a PDZ 4 domain. Residues 1011–1042 (ELNNPTSAPSSEKQSPMAQQHSPLAQQHSPLA) are compositionally biased toward polar residues. The segment at 1011 to 1130 (ELNNPTSAPS…PDTRQYPLSD (120 aa)) is disordered. Residues 1069–1085 (NSYRSEVKARQDVKPDI) are compositionally biased toward basic and acidic residues. Residues 1141–1223 (TVDMEKGAKG…RVRLLLKRGT (83 aa)) enclose the PDZ 5 domain.

It belongs to the MAGUK family. As to quaternary structure, interacts (via its WW domains) with DRPLA. Interacts with CTNNB1, ACVR2A, SMAD2 and SMAD3. Part of a complex consisting of MAGI2/ARIP1, ACVR2A, ACVR1B and SMAD3. May interact with HTR2A and IGSF9. Interacts with HTR4. Interacts (via guanylate kinase domain) with DLGAP1. Interacts (via PDZ domains) with GRIN2A, GRID2 and NLGN1. Interacts with CTNND2. Interacts with MAGUIN-1. Interacts (via its second PDZ domain) with PTEN (via unphosphorylated C-terminus); this interaction diminishes the degradation rate of PTEN. Found in a complex, at least composed of KIDINS220, MAGI2, NTRK1 and RAPGEF2; the complex is mainly formed at late endosomes in a NGF-dependent manner. Interacts with RAPGEF2; the interaction occurs before or after nerve growth factor (NGF) stimulation. Isoform 1 interacts (via PDZ domain) with KIDINS220 isoform 2 (via C-terminal domain). Interacts with DDN. Identified in a complex with ACTN4, CASK, IQGAP1, NPHS1, SPTAN1 and SPTBN1. Interacts with DLL1. Found in a complex with IGSF9B and NLGN2; the interaction with IGSF9B is mediated via the PDZ 5 and PDZ 6 domains, while the interaction with NLGN2 is mediated via the WW1, WW2 and PDZ2 domains. Interacts (via PDZ 6 domain) with USH1G (via SAM domain); the interaction is triggered by phosphorylation of USH1G by CK2 and negatively regulates MAGI2-mediated endocytosis. Expressed in the foot process layer of podocytes of the kidney glomeruli but not in tubules (at protein level). Expressed in the brain.

Its subcellular location is the cytoplasm. The protein resides in the late endosome. It localises to the synapse. It is found in the synaptosome. The protein localises to the cell membrane. Its subcellular location is the cytoskeleton. The protein resides in the microtubule organizing center. It localises to the centrosome. It is found in the cell projection. The protein localises to the cilium. Its subcellular location is the centriole. The protein resides in the photoreceptor inner segment. It localises to the photoreceptor outer segment. In terms of biological role, seems to act as scaffold molecule at synaptic junctions by assembling neurotransmitter receptors and cell adhesion proteins. Plays a role in nerve growth factor (NGF)-induced recruitment of RAPGEF2 to late endosomes and neurite outgrowth. May play a role in regulating activin-mediated signaling in neuronal cells. Enhances the ability of PTEN to suppress AKT1 activation. Plays a role in receptor-mediated clathrin-dependent endocytosis which is required for ciliogenesis. This Rattus norvegicus (Rat) protein is Membrane-associated guanylate kinase, WW and PDZ domain-containing protein 2 (Magi2).